Consider the following 503-residue polypeptide: ATP synthase subunit alpha (503 aa).

170-177 (GDRKTGKT) lines the ATP pocket.

This sequence belongs to the ATPase alpha/beta chains family. F-type ATPases have 2 components, CF(1) - the catalytic core - and CF(0) - the membrane proton channel. CF(1) has five subunits: alpha(3), beta(3), gamma(1), delta(1), epsilon(1). CF(0) has four main subunits: a, b, b' and c.

Its subcellular location is the cellular thylakoid membrane. The enzyme catalyses ATP + H2O + 4 H(+)(in) = ADP + phosphate + 5 H(+)(out). Produces ATP from ADP in the presence of a proton gradient across the membrane. The alpha chain is a regulatory subunit. The polypeptide is ATP synthase subunit alpha (Rippkaea orientalis (strain PCC 8801 / RF-1) (Cyanothece sp. (strain PCC 8801))).